Here is a 129-residue protein sequence, read N- to C-terminus: Large ribosomal subunit protein eL31 (129 aa).

The tract at residues 1–46 (MSQETTATKQEEQKTSELQQQKKEEQKPQQATTTTKEEKKTKPEKE) is disordered. Composition is skewed to basic and acidic residues over residues 9–27 (KQEE…EEQK) and 35–46 (TKEEKKTKPEKE).

This sequence belongs to the eukaryotic ribosomal protein eL31 family.

The polypeptide is Large ribosomal subunit protein eL31 (rpl31e) (Sulfolobus acidocaldarius (strain ATCC 33909 / DSM 639 / JCM 8929 / NBRC 15157 / NCIMB 11770)).